We begin with the raw amino-acid sequence, 906 residues long: Protein translocase subunit SecA (906 aa).

Residues Gln-86, 104-108 (GEGKT), and Asp-511 each bind ATP. 2 stretches are compositionally biased toward basic and acidic residues: residues 853 to 865 (HESV…RHDE) and 877 to 888 (VRREGPKVKRND). The disordered stretch occupies residues 853–906 (HESVIDNNQRHDEDEQEETPKVQQVRREGPKVKRNDPCPCGSGKKYKQCHGKVE). 4 residues coordinate Zn(2+): Cys-890, Cys-892, Cys-901, and His-902. Basic residues predominate over residues 896 to 906 (KKYKQCHGKVE).

This sequence belongs to the SecA family. As to quaternary structure, monomer and homodimer. Part of the essential Sec protein translocation apparatus which comprises SecA, SecYEG and auxiliary proteins SecDF-YajC and YidC. Requires Zn(2+) as cofactor.

Its subcellular location is the cell inner membrane. The protein localises to the cytoplasm. The catalysed reaction is ATP + H2O + cellular proteinSide 1 = ADP + phosphate + cellular proteinSide 2.. In terms of biological role, part of the Sec protein translocase complex. Interacts with the SecYEG preprotein conducting channel. Has a central role in coupling the hydrolysis of ATP to the transfer of proteins into and across the cell membrane, serving both as a receptor for the preprotein-SecB complex and as an ATP-driven molecular motor driving the stepwise translocation of polypeptide chains across the membrane. In Francisella tularensis subsp. novicida (strain U112), this protein is Protein translocase subunit SecA.